The chain runs to 441 residues: Ankyrin repeat and MYND domain-containing protein 2 (441 aa).

ANK repeat units lie at residues 45 to 74 (NGMT…DVNC), 79 to 108 (HGYT…ETDV), and 159 to 188 (KLAG…NPLL). The Zn(2+) site is built by Cys320, Cys323, Cys332, Cys335, Cys341, Cys345, His353, and Cys357. An MYND-type zinc finger spans residues 320-357 (CTTCGEKGASKRCSVCKMVIYCDQTCQKTHWFTHKKIC). A compositionally biased stretch (basic and acidic residues) spans 374 to 384 (EKRQEENHGKL). Residues 374-441 (EKRQEENHGK…APAGPQVSEE (68 aa)) form a disordered region.

In terms of assembly, interacts with the retinal-specific guanylyl cyclase GC1.

Its subcellular location is the cell projection. The protein resides in the cilium. In terms of biological role, may be involved in the trafficking of signaling proteins to the cilia. The polypeptide is Ankyrin repeat and MYND domain-containing protein 2 (ANKMY2) (Homo sapiens (Human)).